Here is a 544-residue protein sequence, read N- to C-terminus: Serine/threonine-protein kinase PAK 3 (544 aa).

The interval 1-73 (MSDSLDNEEK…EKERPEISLP (73 aa)) is disordered. Phosphoserine occurs at positions 2 and 4. Polar residues predominate over residues 18–32 (MNSNNRDSSALNHSS). Position 50 is a phosphoserine; by autocatalysis (Ser50). Residues 63–73 (KEKERPEISLP) are compositionally biased toward basic and acidic residues. Residues 65-108 (KERPEISLPSDFEHTIHVGFDAVTGEFTGIPEQWARLLQTSNIT) form a GTPase-binding region. The autoregulatory region stretch occupies residues 65–135 (KERPEISLPS…YDSKETVNNQ (71 aa)). The CRIB domain maps to 70-83 (ISLPSDFEHTIHVG). The interval 84-267 (FDAVTGEFTG…IVSVGDPKKK (184 aa)) is linker. The residue at position 139 (Ser139) is a Phosphoserine; by autocatalysis. Disordered stretches follow at residues 156-197 (SNTK…RPEH) and 213-248 (PAAPNKEATPPSAENANSSTLYRNTDRQRKKSKMTD). Ser171 carries the post-translational modification Phosphoserine. The span at 171 to 186 (SEEEDEEEEEEEDDNE) shows a compositional bias: acidic residues. A compositionally biased stretch (polar residues) spans 224–235 (SAENANSSTLYR). One can recognise a Protein kinase domain in the interval 268–519 (YTRFEKIGQG…AKELLQHPFL (252 aa)). Residues 274–282 (IGQGASGTV) and Lys297 each bind ATP. Asp387 (proton acceptor) is an active-site residue. Phosphothreonine; by autocatalysis is present on Thr421.

The protein belongs to the protein kinase superfamily. STE Ser/Thr protein kinase family. STE20 subfamily. Interacts tightly with GTP-bound but not GDP-bound CDC42/p21 and RAC1. Shows highly specific binding to the SH3 domains of phospholipase C-gamma and of adapter protein NCK. Interacts with the C-terminal of APP. Interacts with ARHGEF6 and ARHGEF7. Interacts with GIT1 and GIT2. Mg(2+) is required as a cofactor. Post-translationally, autophosphorylated when activated by CDC42/p21. Neddylated. Detected at high levels in the brain and at low levels in the testis.

It localises to the cytoplasm. The enzyme catalyses L-seryl-[protein] + ATP = O-phospho-L-seryl-[protein] + ADP + H(+). It catalyses the reaction L-threonyl-[protein] + ATP = O-phospho-L-threonyl-[protein] + ADP + H(+). With respect to regulation, activated by binding small G proteins. Binding of GTP-bound CDC42 or RAC1 to the autoregulatory region releases monomers from the autoinhibited dimer, enables phosphorylation of Thr-421 and allows the kinase domain to adopt an active structure. Its function is as follows. Serine/threonine protein kinase that plays a role in a variety of different signaling pathways including cytoskeleton regulation, cell migration, or cell cycle regulation. Plays a role in dendrite spine morphogenesis as well as synapse formation and plasticity. Acts as a downstream effector of the small GTPases CDC42 and RAC1. Activation by the binding of active CDC42 and RAC1 results in a conformational change and a subsequent autophosphorylation on several serine and/or threonine residues. Phosphorylates MAPK4 and MAPK6 and activates the downstream target MAPKAPK5, a regulator of F-actin polymerization and cell migration. Additionally, phosphorylates TNNI3/troponin I to modulate calcium sensitivity and relaxation kinetics of thin myofilaments. May also be involved in early neuronal development. In hippocampal neurons, necessary for the formation of dendritic spines and excitatory synapses; this function is dependent on kinase activity and may be exerted by the regulation of actomyosin contractility through the phosphorylation of myosin II regulatory light chain (MLC). The sequence is that of Serine/threonine-protein kinase PAK 3 (Pak3) from Rattus norvegicus (Rat).